The following is a 331-amino-acid chain: Putative sigma L-dependent transcriptional regulator YplP (331 aa).

One can recognise a Sigma-54 factor interaction domain in the interval 12–213; it reads HLIGEHQTFL…LKNAADYMAA (202 aa). 95–104 lines the ATP pocket; sequence AVRGTLFLDD.

Functionally, may play a role in cold adaptation. The polypeptide is Putative sigma L-dependent transcriptional regulator YplP (yplP) (Bacillus subtilis (strain 168)).